The sequence spans 224 residues: MPDFVIVLINLAFCLGAYLFGSINFSIIYSKFKKNDVRKLGSGNAGSTNVLRNFGVKIALVIFALDILKTYLASLLVYFVNLYAFKDSVVVFHAVAYCVVIGHIFPIWHKFKGGKGAASTLGYIISVNIIIAVIGAIVYLLIIIYWKRIVSFTTLITIPSLLPLMFIPWMSQLPLGFIAYQWPWWISPLVYVLIILLVIWSHHENISRMIKGQEKVIKWNKTSK.

The next 6 membrane-spanning stretches (helical) occupy residues 4 to 24 (FVIVLINLAFCLGAYLFGSIN), 60 to 80 (LVIFALDILKTYLASLLVYFV), 88 to 108 (SVVVFHAVAYCVVIGHIFPIW), 124 to 144 (IISVNIIIAVIGAIVYLLIII), 149 to 169 (IVSFTTLITIPSLLPLMFIPW), and 182 to 202 (WPWWISPLVYVLIILLVIWSH).

It belongs to the PlsY family. Probably interacts with PlsX.

It localises to the cell membrane. It carries out the reaction an acyl phosphate + sn-glycerol 3-phosphate = a 1-acyl-sn-glycero-3-phosphate + phosphate. Its pathway is lipid metabolism; phospholipid metabolism. Its function is as follows. Catalyzes the transfer of an acyl group from acyl-phosphate (acyl-PO(4)) to glycerol-3-phosphate (G3P) to form lysophosphatidic acid (LPA). This enzyme utilizes acyl-phosphate as fatty acyl donor, but not acyl-CoA or acyl-ACP. The protein is Glycerol-3-phosphate acyltransferase of Mycoplasmopsis pulmonis (strain UAB CTIP) (Mycoplasma pulmonis).